The following is a 149-amino-acid chain: Ribose-5-phosphate isomerase B (149 aa).

9 to 10 (DH) contacts D-ribulose 5-phosphate. Cys66 functions as the Proton acceptor in the catalytic mechanism. 67–71 (GTGVG) is a binding site for D-ribulose 5-phosphate. Residue His99 is the Proton donor of the active site. D-ribulose 5-phosphate is bound by residues Asn100, Arg110, Arg133, and Arg137.

Belongs to the LacAB/RpiB family. In terms of assembly, homodimer, and homotetramer.

It catalyses the reaction aldehydo-D-ribose 5-phosphate = D-ribulose 5-phosphate. It carries out the reaction D-allose 6-phosphate = D-allulose 6-phosphate. It participates in carbohydrate degradation; pentose phosphate pathway; D-ribose 5-phosphate from D-ribulose 5-phosphate (non-oxidative stage): step 1/1. With respect to regulation, inhibited by iodoacetate and glucose 6-phosphate. In terms of biological role, catalyzes the interconversion of ribulose-5-P and ribose-5-P. It probably also has activity on D-allose 6-phosphate. In Escherichia coli (strain K12), this protein is Ribose-5-phosphate isomerase B.